Here is a 438-residue protein sequence, read N- to C-terminus: Serine hydroxymethyltransferase (438 aa).

(6S)-5,6,7,8-tetrahydrofolate is bound by residues Leu-133 and 137–139; that span reads GHL. An N6-(pyridoxal phosphate)lysine modification is found at Lys-242.

This sequence belongs to the SHMT family. In terms of assembly, homodimer. Pyridoxal 5'-phosphate is required as a cofactor.

Its subcellular location is the cytoplasm. It catalyses the reaction (6R)-5,10-methylene-5,6,7,8-tetrahydrofolate + glycine + H2O = (6S)-5,6,7,8-tetrahydrofolate + L-serine. It functions in the pathway one-carbon metabolism; tetrahydrofolate interconversion. It participates in amino-acid biosynthesis; glycine biosynthesis; glycine from L-serine: step 1/1. Its function is as follows. Catalyzes the reversible interconversion of serine and glycine with tetrahydrofolate (THF) serving as the one-carbon carrier. This reaction serves as the major source of one-carbon groups required for the biosynthesis of purines, thymidylate, methionine, and other important biomolecules. Also exhibits THF-independent aldolase activity toward beta-hydroxyamino acids, producing glycine and aldehydes, via a retro-aldol mechanism. The chain is Serine hydroxymethyltransferase from Brucella abortus (strain S19).